The following is a 775-amino-acid chain: Probable ubiquitin carboxyl-terminal hydrolase creB (775 aa).

The segment at 1 to 45 is disordered; the sequence is MGSFLRSFRHNGGSTAPSVGAVPAKKEPQPPPMTPLEKRLLDMGP. Basic and acidic residues predominate over residues 36–45; sequence LEKRLLDMGP. The region spanning 55 to 468 is the USP domain; the sequence is YGMENYGNTC…CAYVLFYQET (414 aa). Catalysis depends on C64, which acts as the Nucleophile. 2 disordered regions span residues 113–146 and 238–269; these read EAEA…DSPE and ASKQ…KTPN. Residues 256–269 show a composition bias toward polar residues; sequence SVDQSSSTGSKTPN. The active-site Proton acceptor is H419. Residues 496-775 form a disordered region; the sequence is LKQNGFPQSP…LRKKSFSILS (280 aa). 2 stretches are compositionally biased toward low complexity: residues 546–566 and 576–585; these read ESAP…SPLS and ERVTTVATPP. The stretch at 586 to 653 forms a coiled coil; that stretch reads KNDALAKKER…ASKAEEDRRL (68 aa). Residues 589 to 662 show a composition bias toward basic and acidic residues; that stretch reads ALAKKERARE…LSHENGKEKQ (74 aa). The span at 668-679 shows a compositional bias: basic residues; that stretch reads RLKRGSKSLSHR. Positions 705–725 are enriched in low complexity; the sequence is SQTGPTSEQQQQQQQQQSPPN. Basic and acidic residues predominate over residues 739–757; that stretch reads TIREDEQVNHKDSKHERTG. The span at 758 to 775 shows a compositional bias: basic residues; that stretch reads HGKWRSFSLRKKSFSILS.

The protein belongs to the peptidase C19 family. As to quaternary structure, interacts with creA, creC and qutD.

It catalyses the reaction Thiol-dependent hydrolysis of ester, thioester, amide, peptide and isopeptide bonds formed by the C-terminal Gly of ubiquitin (a 76-residue protein attached to proteins as an intracellular targeting signal).. Ubiquitin thioesterase component of the regulatory network controlling carbon source utilization through ubiquitination and deubiquitination involving creA, creB, creC, creD and acrB. Deubiquitinates the creA catabolic repressor and the quinate permease qutD. Also plays a role in response to carbon starvation and the control of extracellular proteases activity. This is Probable ubiquitin carboxyl-terminal hydrolase creB (creB) from Aspergillus fumigatus (strain ATCC MYA-4609 / CBS 101355 / FGSC A1100 / Af293) (Neosartorya fumigata).